The primary structure comprises 613 residues: Zinc finger CCHC domain-containing protein 8 (613 aa).

The CCHC-type zinc-finger motif lies at 126–143 (SHCFNCGSEEHQIKDCPK). Polar residues-rich tracts occupy residues 304–321 (HAPS…QPSS) and 345–358 (EVSQ…SFQF). 4 disordered regions span residues 304–330 (HAPS…PKDD), 344–417 (VEVS…SQPK), 448–473 (ESTN…SPSR), and 494–546 (FSSI…EVND). Pro residues predominate over residues 360-383 (PPLPPGPPVISTPPPLPQGTPPLT). The span at 384-394 (PRSLTPTQPST) shows a compositional bias: low complexity. Positions 404-414 (VSSLNPSSDVS) are enriched in polar residues. A coiled-coil region spans residues 431 to 451 (EELEEQQRLIWAALEQAESTN). Polar residues-rich tracts occupy residues 462–473 (LTGNSVTSSPSR) and 494–519 (FSSI…SSLN).

Belongs to the ZCCHC8 family.

It localises to the nucleus. The protein resides in the nucleoplasm. Functionally, scaffolding subunit of the trimeric nuclear exosome targeting (NEXT) complex that is involved in the surveillance and turnover of aberrant transcripts and non-coding RNAs. NEXT functions as an RNA exosome cofactor that directs a subset of non-coding short-lived RNAs for exosomal degradation. May be involved in pre-mRNA splicing. It is required for 3'-end maturation of telomerase RNA component (TERC), TERC 3'-end targeting to the nuclear RNA exosome, and for telomerase function. The protein is Zinc finger CCHC domain-containing protein 8 (ZCCHC8) of Gallus gallus (Chicken).